A 134-amino-acid chain; its full sequence is UPF0756 membrane protein YeaL (134 aa).

A run of 4 helical transmembrane segments spans residues 14-34 (ALGFISHNTTVAVSILVLIIV), 51-71 (LTVGIIILTIGVMAPIASGTL), 86-106 (LVAIAVGVFVSWLGGRGITLM), and 110-130 (PQLVAGLLVGTVLGVALFRGV).

Belongs to the UPF0756 family.

It is found in the cell membrane. The sequence is that of UPF0756 membrane protein YeaL from Salmonella typhimurium (strain LT2 / SGSC1412 / ATCC 700720).